The primary structure comprises 396 residues: Seminal vesicle major clotting proteins (396 aa).

A signal peptide spans 1-21 (MKSTIFFILSLLLMLENQAAG). Residues 45–178 (MEEAVSGSGL…ASSVDHRKKG (134 aa)) are disordered. Residues 60 to 152 (RGSDREESVG…RVSVRHERVE (93 aa)) are compositionally biased toward basic and acidic residues. SVP-3/-4 repeat repeat units lie at residues 65 to 88 (EESV…RSSV), 89 to 112 (EEPE…RHNV), and 113 to 136 (EEPE…RHSA). One copy of the SVP-3/-4 repeat; truncated repeat lies at 137 to 157 (EEPEGERVSVRHERVEKTHKR). Residues 177 to 192 (KGHIRFKRQDPIAALA) constitute a propeptide that is removed on maturation. SVP-1 clotting repeat units follow at residues 194-217 (IEGQ…ERFS), 218-241 (VKGQ…ERFS), 242-265 (VTGQ…ERFS), 266-289 (MTGQ…ERFS), 290-313 (MTGQ…ERFS), 314-337 (VTGQ…ERFS), 338-361 (VTGQ…ERFS), and 362-385 (VSGQ…SGFS). Residues 194–396 (IEGQDAVKDS…KGQGSLKGLI (203 aa)) are 9 X tandem repeats of SVP-1 like motif. The disordered stretch occupies residues 377-396 (QESVQSGFSVKGQGSLKGLI). One copy of the SVP-1 clotting 9; truncated repeat lies at 386–396 (VKGQGSLKGLI).

To the SVP-2 precursor, particularly in regions where protein processing must occur. Post-translationally, SVP-3 may be a post-translationally modified form of SVP-4. In terms of processing, covalent clotting of SVP-1 is catalyzed by a transglutaminase secreted by the anterior prostate through the formation of gamma-glutamyl-epsilon-lysine cross-links. The conserved 2 Lys and 1 Gln residues per functional unit seem to be the residues involved in the formation of those cross-links.

Its subcellular location is the secreted. Functionally, SVP-1 serves as substrate in the formation of the copulatory plug. SVP-3 and SVP-4 may also contribute to the clot. This is Seminal vesicle major clotting proteins from Cavia porcellus (Guinea pig).